Consider the following 741-residue polypeptide: Cellulose 1,4-beta-cellobiosidase (reducing end) CelS (741 aa).

The signal sequence occupies residues 1–27 (MVKSRKISILLAVAMLVSIMIPTTAFA). Glu-76 lines the substrate pocket. The active-site Proton donor is Glu-87. Substrate contacts are provided by residues Thr-140, Asn-204, Asp-241, Gln-247, and 251–252 (TN). Asp-255 functions as the Nucleophile in the catalytic mechanism. Substrate-binding positions include 301–302 (KY), 326–327 (WY), Tyr-421, Asp-520, and 645–646 (WH). A Dockerin domain is found at 673 to 739 (STKLYGDVND…ILKEIDTLPY (67 aa)). Positions 679, 681, 683, 684, 685, 690, 711, 712, 713, 715, 717, and 722 each coordinate Ca(2+).

This sequence belongs to the glycosyl hydrolase 48 (cellulase L) family.

It localises to the secreted. The enzyme catalyses Hydrolysis of (1-&gt;4)-beta-D-glucosidic linkages in cellulose and similar substrates, releasing cellobiose from the reducing ends of the chains.. With respect to regulation, inhibited by cellobiose and lactose, but not by glucose. This enzyme catalyzes the exohydrolysis of 1,4-beta-glucosidic linkages in cellulose with a preference for amorphous or crystalline cellulose over carboxymethyl cellulose. In Acetivibrio thermocellus (strain ATCC 27405 / DSM 1237 / JCM 9322 / NBRC 103400 / NCIMB 10682 / NRRL B-4536 / VPI 7372) (Clostridium thermocellum), this protein is Cellulose 1,4-beta-cellobiosidase (reducing end) CelS (celS).